A 180-amino-acid chain; its full sequence is Cytokinin-beta-glucosidase 3 (180 aa).

Functionally, hydrolyzes cytokinin glucosides thus liberating free cytokinins. The sequence is that of Cytokinin-beta-glucosidase 3 (ROLC3) from Panax ginseng (Korean ginseng).